Reading from the N-terminus, the 493-residue chain is Telomere-binding protein subunit alpha (493 aa).

Residues 1 to 30 (MSSAKRSTSRVSKKKAAPAKDGAPKKREQS) are disordered. Basic residues predominate over residues 7 to 17 (STSRVSKKKAA).

It belongs to the telombin family. In terms of assembly, heterodimer of an alpha and a beta subunit.

Its subcellular location is the nucleus. The protein localises to the chromosome. The protein resides in the telomere. May function as protective capping of the single-stranded telomeric overhang. May also participate in telomere length regulation during DNA replication. The protein is Telomere-binding protein subunit alpha (STY56V) of Stylonychia mytilus (Ciliate).